The chain runs to 202 residues: IMP cyclohydrolase (202 aa).

It belongs to the archaeal IMP cyclohydrolase family.

The enzyme catalyses IMP + H2O = 5-formamido-1-(5-phospho-D-ribosyl)imidazole-4-carboxamide. The protein operates within purine metabolism; IMP biosynthesis via de novo pathway; IMP from 5-formamido-1-(5-phospho-D-ribosyl)imidazole-4-carboxamide: step 1/1. Functionally, catalyzes the cyclization of 5-formylamidoimidazole-4-carboxamide ribonucleotide to IMP. The chain is IMP cyclohydrolase from Methanosphaera stadtmanae (strain ATCC 43021 / DSM 3091 / JCM 11832 / MCB-3).